The primary structure comprises 258 residues: Phosphate import ATP-binding protein PstB (258 aa).

The ABC transporter domain maps to 13 to 253 (IKIENLNLWY…PREKSTEDYI (241 aa)). Residue 45–52 (GPSGCGKS) participates in ATP binding.

Belongs to the ABC transporter superfamily. Phosphate importer (TC 3.A.1.7) family. The complex is composed of two ATP-binding proteins (PstB), two transmembrane proteins (PstC and PstA) and a solute-binding protein (PstS).

The protein localises to the cell membrane. It carries out the reaction phosphate(out) + ATP + H2O = ADP + 2 phosphate(in) + H(+). Its function is as follows. Part of the ABC transporter complex PstSACB involved in phosphate import. Responsible for energy coupling to the transport system. The protein is Phosphate import ATP-binding protein PstB of Methanosarcina barkeri (strain Fusaro / DSM 804).